We begin with the raw amino-acid sequence, 120 residues long: Protein RALF-like 1 (120 aa).

An N-terminal signal peptide occupies residues Met-1–Ala-26. A propeptide spans Gly-27–Leu-71 (removed in mature form). Asn-43 carries N-linked (GlcNAc...) asparagine glycosylation. 2 disulfide bridges follow: Cys-89-Cys-99 and Cys-112-Cys-118.

It belongs to the plant rapid alkalinization factor (RALF) family. Interacts with FER and promotes its phosphorylation and subsequent activation. Post-translationally, proteolytically cleaved, probably by S1P, a subtilisin-like serine protease (subtilase). As to expression, expressed in roots and stems.

The protein resides in the secreted. Functionally, cell signaling peptide that may regulate plant stress, growth, and development. Mediates a rapid alkalinization of extracellular space by mediating a transient increase in the cytoplasmic Ca(2+) concentration leading to a calcium-dependent signaling events through a cell surface receptor and a concomitant activation of some intracellular mitogen-activated protein kinases. Mostly active in roots. Prevents plant growth (e.g. root and leaf length). Suppresses cell elongation of the primary root by activating the cell surface receptor FER and triggering phosphorylation of AHA2 and subsequent extracellular alkalinization. This is Protein RALF-like 1 (RALF1) from Arabidopsis thaliana (Mouse-ear cress).